The primary structure comprises 682 residues: Homeobox-leucine zipper protein HDG7 (682 aa).

The tract at residues 33 to 65 (LSDDSFDAMSGDEDKQEQRPKKKKRKTKYHRHT) is disordered. Basic residues predominate over residues 52-65 (PKKKKRKTKYHRHT). A DNA-binding region (homeobox) is located at residues 57–116 (RKTKYHRHTSYQIQELESFFKECPHPNEKQRLELGKKLTLESKQIKFWFQNRRTQMKTQL). Positions 105–186 (FQNRRTQMKT…LDRICALANR (82 aa)) form a coiled coil. Residues 214–429 (SGGTSLMFMD…LQRQCESFTM (216 aa)) form the START domain.

It belongs to the HD-ZIP homeobox family. Class IV subfamily. Interacts with AIL7/PLT7. As to expression, expressed in cells around the base of leaf primordia, in the outermost 2 to 3 cell layers along the boundary between two leaf primordia. Expressed in lateral root primordia and tips, and in the epidermal boundaries of two cotyledons at heart-stage embryo.

Its subcellular location is the nucleus. Probable transcription factor that binds to the DNA sequence 5'-GCATTAAATGC-3'. Seems to promote cell differentiation. The protein is Homeobox-leucine zipper protein HDG7 of Arabidopsis thaliana (Mouse-ear cress).